Reading from the N-terminus, the 54-residue chain is Ovomucoid (54 aa).

One can recognise a Kazal-like domain in the interval 4-54; that stretch reads VDCSEYPKPVCSPEYMPLCGSDSKTYNNKCDFCSAVVESNGTLTLGHFGKC. Cystine bridges form between cysteine 6–cysteine 36, cysteine 14–cysteine 33, and cysteine 22–cysteine 54. An N-linked (GlcNAc...) asparagine glycan is attached at asparagine 43.

It localises to the secreted. The sequence is that of Ovomucoid from Casuarius casuarius (Southern cassowary).